Consider the following 171-residue polypeptide: Crossover junction endodeoxyribonuclease RuvC (171 aa).

Residues Asp-11, Glu-71, and Asp-143 contribute to the active site. Mg(2+) contacts are provided by Asp-11, Glu-71, and Asp-143.

Belongs to the RuvC family. As to quaternary structure, homodimer which binds Holliday junction (HJ) DNA. The HJ becomes 2-fold symmetrical on binding to RuvC with unstacked arms; it has a different conformation from HJ DNA in complex with RuvA. In the full resolvosome a probable DNA-RuvA(4)-RuvB(12)-RuvC(2) complex forms which resolves the HJ. Requires Mg(2+) as cofactor.

Its subcellular location is the cytoplasm. It carries out the reaction Endonucleolytic cleavage at a junction such as a reciprocal single-stranded crossover between two homologous DNA duplexes (Holliday junction).. The RuvA-RuvB-RuvC complex processes Holliday junction (HJ) DNA during genetic recombination and DNA repair. Endonuclease that resolves HJ intermediates. Cleaves cruciform DNA by making single-stranded nicks across the HJ at symmetrical positions within the homologous arms, yielding a 5'-phosphate and a 3'-hydroxyl group; requires a central core of homology in the junction. The consensus cleavage sequence is 5'-(A/T)TT(C/G)-3'. Cleavage occurs on the 3'-side of the TT dinucleotide at the point of strand exchange. HJ branch migration catalyzed by RuvA-RuvB allows RuvC to scan DNA until it finds its consensus sequence, where it cleaves and resolves the cruciform DNA. The polypeptide is Crossover junction endodeoxyribonuclease RuvC (Bartonella tribocorum (strain CIP 105476 / IBS 506)).